The sequence spans 168 residues: GTP-dependent dephospho-CoA kinase (168 aa).

5 residues coordinate GTP: D40, V41, V42, D59, and E112.

It belongs to the GTP-dependent DPCK family.

It carries out the reaction 3'-dephospho-CoA + GTP = GDP + CoA + H(+). The protein operates within cofactor biosynthesis; coenzyme A biosynthesis. Functionally, catalyzes the GTP-dependent phosphorylation of the 3'-hydroxyl group of dephosphocoenzyme A to form coenzyme A (CoA). The sequence is that of GTP-dependent dephospho-CoA kinase from Methanoregula boonei (strain DSM 21154 / JCM 14090 / 6A8).